Reading from the N-terminus, the 300-residue chain is Probable phytol kinase, chloroplastic (300 aa).

Residues 1 to 36 constitute a chloroplast transit peptide; the sequence is MAAARPALPSSPTSLLLARSTSAPDLAARRPRRWLV. The next 7 membrane-spanning stretches (helical) occupy residues 60 to 78, 98 to 118, 122 to 142, 168 to 188, 227 to 247, 254 to 274, and 276 to 296; these read LLRD…YSLV, VVHV…SNST, FFAA…GLGF, YVIV…IGIV, FISG…LGYI, ALGK…IPVT, and VVDD…LLFG.

It belongs to the polyprenol kinase family.

The protein localises to the plastid. It localises to the chloroplast membrane. The catalysed reaction is phytol + CTP = phytyl phosphate + CDP + H(+). The protein operates within cofactor biosynthesis; tocopherol biosynthesis. In terms of biological role, involved in the activation and reutilization of phytol from chlorophyll degradation in plant metabolism, including tocopherol biosynthesis. Catalyzes the conversion of phytol to phytol monophosphate (PMP). In Triticum aestivum (Wheat), this protein is Probable phytol kinase, chloroplastic.